We begin with the raw amino-acid sequence, 100 residues long: Small ribosomal subunit protein uS14 (100 aa).

The protein belongs to the universal ribosomal protein uS14 family. Part of the 30S ribosomal subunit. Contacts proteins S3 and S10.

Its function is as follows. Binds 16S rRNA, required for the assembly of 30S particles and may also be responsible for determining the conformation of the 16S rRNA at the A site. The polypeptide is Small ribosomal subunit protein uS14 (Synechocystis sp. (strain ATCC 27184 / PCC 6803 / Kazusa)).